A 218-amino-acid chain; its full sequence is MMDLKTKAFDISQNFTISLDGPAASGKGTIGLMLAKKFSLKYFQSSIVYRQLTFDCISQKIDITDIDAVIALSKRLKLDNNLDLENENIGDIASQIAVISEVRNNLNKYLINLVKTTPRIIMEGRDIGTVVAPDADLKIFITANPDIRAERRYKQLQAKGKACILDEILQQIILRDKRDKERKVAPLLPASDALIIDTSKLSAIEVVEEITHYMQIIK.

Residue 21–29 coordinates ATP; it reads GPAASGKGT.

It belongs to the cytidylate kinase family. Type 1 subfamily.

It localises to the cytoplasm. The enzyme catalyses CMP + ATP = CDP + ADP. It carries out the reaction dCMP + ATP = dCDP + ADP. This is Cytidylate kinase from Rickettsia canadensis (strain McKiel).